A 251-amino-acid polypeptide reads, in one-letter code: HTH-type transcriptional regulator UlaR (251 aa).

The HTH deoR-type domain occupies 3-58; sequence EAQRHQILLDMLAQLGFVTVENVIERLGISPATARRDINKLDESGKLKKVRNGAEA. The H-T-H motif DNA-binding region spans 20-39; sequence VTVENVIERLGISPATARRD.

The protein resides in the cytoplasm. Functionally, represses ulaG and the ulaABCDEF operon. The protein is HTH-type transcriptional regulator UlaR of Salmonella agona (strain SL483).